Consider the following 133-residue polypeptide: Small ribosomal subunit protein uS8 (133 aa).

The protein belongs to the universal ribosomal protein uS8 family. In terms of assembly, part of the 30S ribosomal subunit. Contacts proteins S5 and S12.

Its function is as follows. One of the primary rRNA binding proteins, it binds directly to 16S rRNA central domain where it helps coordinate assembly of the platform of the 30S subunit. This chain is Small ribosomal subunit protein uS8, found in Trichormus variabilis (strain ATCC 29413 / PCC 7937) (Anabaena variabilis).